The sequence spans 323 residues: tRNA uridine(34) hydroxylase (323 aa).

A Rhodanese domain is found at Gln127–Asp221. The active-site Cysteine persulfide intermediate is the Cys181.

Belongs to the TrhO family.

The catalysed reaction is uridine(34) in tRNA + AH2 + O2 = 5-hydroxyuridine(34) in tRNA + A + H2O. In terms of biological role, catalyzes oxygen-dependent 5-hydroxyuridine (ho5U) modification at position 34 in tRNAs. This Oceanobacillus iheyensis (strain DSM 14371 / CIP 107618 / JCM 11309 / KCTC 3954 / HTE831) protein is tRNA uridine(34) hydroxylase.